The chain runs to 86 residues: Large ribosomal subunit protein bL27 (86 aa).

Residues 1–26 (MATKKAGGSSRNGRDSAGRRLGIKKS) form a disordered region.

Belongs to the bacterial ribosomal protein bL27 family.

This Rickettsia typhi (strain ATCC VR-144 / Wilmington) protein is Large ribosomal subunit protein bL27.